A 547-amino-acid chain; its full sequence is Chaperonin GroEL 1 (547 aa).

ATP contacts are provided by residues 30–33 (TLGP), K51, 87–91 (DGTTT), G415, and D496. Residues 525 to 547 (KPEPKSPAGGPGMGGMGGMDGMM) are disordered. The segment covering 533 to 547 (GGPGMGGMGGMDGMM) has biased composition (gly residues).

The protein belongs to the chaperonin (HSP60) family. As to quaternary structure, forms a cylinder of 14 subunits composed of two heptameric rings stacked back-to-back. Interacts with the co-chaperonin GroES.

It localises to the cytoplasm. It carries out the reaction ATP + H2O + a folded polypeptide = ADP + phosphate + an unfolded polypeptide.. Its function is as follows. Together with its co-chaperonin GroES, plays an essential role in assisting protein folding. The GroEL-GroES system forms a nano-cage that allows encapsulation of the non-native substrate proteins and provides a physical environment optimized to promote and accelerate protein folding. This Cereibacter sphaeroides (strain ATCC 17023 / DSM 158 / JCM 6121 / CCUG 31486 / LMG 2827 / NBRC 12203 / NCIMB 8253 / ATH 2.4.1.) (Rhodobacter sphaeroides) protein is Chaperonin GroEL 1.